The following is a 96-amino-acid chain: Small ribosomal subunit protein bS6 (96 aa).

This sequence belongs to the bacterial ribosomal protein bS6 family.

Binds together with bS18 to 16S ribosomal RNA. The chain is Small ribosomal subunit protein bS6 from Bacillus mycoides (strain KBAB4) (Bacillus weihenstephanensis).